We begin with the raw amino-acid sequence, 45 residues long: Photosystem II reaction center protein K (45 aa).

A propeptide spanning residues 1–8 (MEAALLLA) is cleaved from the precursor. The helical transmembrane segment at 24 to 44 (LPIIPVFFLLLAFVWQAAVGF) threads the bilayer.

Belongs to the PsbK family. As to quaternary structure, PSII is composed of 1 copy each of membrane proteins PsbA, PsbB, PsbC, PsbD, PsbE, PsbF, PsbH, PsbI, PsbJ, PsbK, PsbL, PsbM, PsbT, PsbX, PsbY, PsbZ, Psb30/Ycf12, peripheral proteins PsbO, CyanoQ (PsbQ), PsbU, PsbV and a large number of cofactors. It forms dimeric complexes.

Its subcellular location is the cellular thylakoid membrane. Its function is as follows. One of the components of the core complex of photosystem II (PSII). PSII is a light-driven water:plastoquinone oxidoreductase that uses light energy to abstract electrons from H(2)O, generating O(2) and a proton gradient subsequently used for ATP formation. It consists of a core antenna complex that captures photons, and an electron transfer chain that converts photonic excitation into a charge separation. The protein is Photosystem II reaction center protein K of Nostoc sp. (strain PCC 7120 / SAG 25.82 / UTEX 2576).